Reading from the N-terminus, the 495-residue chain is GTPase Der (495 aa).

Residues 3–178 (AKIALVGRPN…EMRDLLPEED (176 aa)) form the EngA-type G 1 domain. Residues 9-16 (GRPNVGKS), 57-61 (DTGGI), and 130-133 (NKVD) contribute to the GTP site. Residues 190-227 (TAVASADADVDADVETEGGTSASETEEGITEETVEDEP) form a disordered region. Acidic residues predominate over residues 213-227 (ETEEGITEETVEDEP). The 174-residue stretch at 231-404 (LRLCMLGRPN…LAARIRRECS (174 aa)) folds into the EngA-type G 2 domain. Residues 237–244 (GRPNAGKS), 284–288 (DTAGV), and 349–352 (NKMD) each bind GTP. One can recognise a KH-like domain in the interval 405–489 (VRIPTGQLNR…PMRVHFRSSH (85 aa)).

Belongs to the TRAFAC class TrmE-Era-EngA-EngB-Septin-like GTPase superfamily. EngA (Der) GTPase family. Associates with the 50S ribosomal subunit.

Its function is as follows. GTPase that plays an essential role in the late steps of ribosome biogenesis. The protein is GTPase Der of Nitratidesulfovibrio vulgaris (strain DP4) (Desulfovibrio vulgaris).